The chain runs to 142 residues: ATP synthase epsilon chain (142 aa).

The protein belongs to the ATPase epsilon chain family. As to quaternary structure, F-type ATPases have 2 components, CF(1) - the catalytic core - and CF(0) - the membrane proton channel. CF(1) has five subunits: alpha(3), beta(3), gamma(1), delta(1), epsilon(1). CF(0) has three main subunits: a, b and c.

Its subcellular location is the cell inner membrane. Its function is as follows. Produces ATP from ADP in the presence of a proton gradient across the membrane. This is ATP synthase epsilon chain from Shewanella denitrificans (strain OS217 / ATCC BAA-1090 / DSM 15013).